The sequence spans 713 residues: Fibroblast growth factor receptor 4 (713 aa).

The signal sequence occupies residues 1 to 20; that stretch reads MLPLWLVLAGLLLAVGPAAS. Residues 21 to 54 are disordered; sequence HRGEMEPDSLASGDDDEDSDGDGPHGDRSEEPVY. Residues 21-281 are Extracellular-facing; that stretch reads HRGEMEPDSL…AETSEAKYTD (261 aa). The segment covering 42-54 has biased composition (basic and acidic residues); the sequence is DGPHGDRSEEPVY. Ig-like C2-type domains follow at residues 59-152 and 161-261; these read PYWT…YLLD and PILQ…AWLT. Residues Cys84 and Cys136 are joined by a disulfide bond. N-linked (GlcNAc...) asparagine glycans are attached at residues Asn133, Asn170, Asn202, Asn223, and Asn234. Cysteines 183 and 245 form a disulfide. Residues 282-302 traverse the membrane as a helical segment; sequence IIIYTSGSLAVAMALIIVVLC. At 303-713 the chain is on the cytoplasmic side; the sequence is RMQTQSSKQP…CLFSCPSGRT (411 aa). The region spanning 379–667 is the Protein kinase domain; that stretch reads LVLGKPLGEG…ILAAISEEYL (289 aa). Residues 385–393 and Lys415 contribute to the ATP site; that span reads LGEGCFGQV. Asp524 (proton acceptor) is an active-site residue. 3 positions are modified to phosphotyrosine; by autocatalysis: Tyr554, Tyr555, and Tyr666.

This sequence belongs to the protein kinase superfamily. Tyr protein kinase family. Fibroblast growth factor receptor subfamily. In terms of assembly, monomer. Homodimer after ligand binding. Interacts with FGF1, FGF2, FGF4, FGF6, FGF8, FGF9, FGF16, FGF17, FGF18, FGF19, FGF21 and FGF23 (in vitro). Binding affinity for FGF family members is enhanced by interactions between FGFs and heparan sulfate proteoglycans. Interacts with KLB; this strongly increases the affinity for FGF19 and FGF23. Affinity for FGF19 is strongly increased by KLB and sulfated glycosaminoglycans. KLB and KL both interact with the core-glycosylated FGFR4 in the endoplasmic reticulum and promote its degradation, so that only FGFR4 with fully mature N-glycans is expressed at the cell surface. Identified in a complex with NCAM1, CDH2, PLCG1, FRS2, SRC, SHC1, GAP43 and CTTN. Interacts with MMP14 and HIP1. Interacts with STAT3. In terms of processing, N-glycosylated. Full maturation of the glycan chains in the Golgi is essential for high affinity interaction with FGF19. Ubiquitinated. Subject to proteasomal degradation when not fully glycosylated. Post-translationally, autophosphorylated. Binding of FGF family members together with heparan sulfate proteoglycan or heparin promotes receptor dimerization and autophosphorylation on tyrosine residues. Autophosphorylation occurs in trans between the two FGFR molecules present in the dimer.

The protein resides in the cell membrane. It localises to the endosome. The protein localises to the endoplasmic reticulum. It catalyses the reaction L-tyrosyl-[protein] + ATP = O-phospho-L-tyrosyl-[protein] + ADP + H(+). With respect to regulation, present in an inactive conformation in the absence of bound ligand. Ligand binding leads to dimerization and activation by autophosphorylation on tyrosine residues. Its function is as follows. Tyrosine-protein kinase that acts as a cell-surface receptor for fibroblast growth factors and plays a role in the regulation of cell proliferation, differentiation and migration, and in regulation of lipid metabolism, bile acid biosynthesis, glucose uptake, vitamin D metabolism and phosphate homeostasis. Required for normal down-regulation of the expression of CYP7A1, the rate-limiting enzyme in bile acid synthesis, in response to FGF19. Phosphorylates PLCG1 and FRS2. Ligand binding leads to the activation of several signaling cascades. Activation of PLCG1 leads to the production of the cellular signaling molecules diacylglycerol and inositol 1,4,5-trisphosphate. Phosphorylation of FRS2 triggers recruitment of GRB2, GAB1, PIK3R1 and SOS1, and mediates activation of RAS, MAPK1/ERK2, MAPK3/ERK1 and the MAP kinase signaling pathway, as well as of the AKT1 signaling pathway. Promotes SRC-dependent phosphorylation of the matrix protease MMP14 and its lysosomal degradation. FGFR4 signaling is down-regulated by receptor internalization and degradation; MMP14 promotes internalization and degradation of FGFR4. The chain is Fibroblast growth factor receptor 4 (FGFR4) from Coturnix coturnix (Common quail).